The following is a 146-amino-acid chain: Transcriptional regulator MraZ (146 aa).

2 SpoVT-AbrB domains span residues 5 to 51 (NHPT…PLQE) and 80 to 123 (GQMV…NHEA).

This sequence belongs to the MraZ family. In terms of assembly, forms oligomers.

The protein resides in the cytoplasm. The protein localises to the nucleoid. The protein is Transcriptional regulator MraZ of Acidobacterium capsulatum (strain ATCC 51196 / DSM 11244 / BCRC 80197 / JCM 7670 / NBRC 15755 / NCIMB 13165 / 161).